Reading from the N-terminus, the 109-residue chain is Cell division protein ZapA (109 aa).

Residues 71-99 (KTRDYASNMEQRIRMLQQTIEQALLEQGR) adopt a coiled-coil conformation.

Belongs to the ZapA family. Type 1 subfamily. In terms of assembly, homodimer. Interacts with FtsZ.

The protein localises to the cytoplasm. Functionally, activator of cell division through the inhibition of FtsZ GTPase activity, therefore promoting FtsZ assembly into bundles of protofilaments necessary for the formation of the division Z ring. It is recruited early at mid-cell but it is not essential for cell division. This chain is Cell division protein ZapA, found in Serratia proteamaculans (strain 568).